The chain runs to 424 residues: Phosphomethylpyrimidine synthase (424 aa).

Substrate is bound by residues N66, M95, Y124, H163, 185-187 (SRG), 226-229 (DGMR), and E265. H269 is a Zn(2+) binding site. F292 contributes to the substrate binding site. H333 contributes to the Zn(2+) binding site. 3 residues coordinate [4Fe-4S] cluster: C408, C411, and C415.

The protein belongs to the ThiC family. [4Fe-4S] cluster is required as a cofactor.

The enzyme catalyses 5-amino-1-(5-phospho-beta-D-ribosyl)imidazole + S-adenosyl-L-methionine = 4-amino-2-methyl-5-(phosphooxymethyl)pyrimidine + CO + 5'-deoxyadenosine + formate + L-methionine + 3 H(+). It participates in cofactor biosynthesis; thiamine diphosphate biosynthesis. Functionally, catalyzes the synthesis of the hydroxymethylpyrimidine phosphate (HMP-P) moiety of thiamine from aminoimidazole ribotide (AIR) in a radical S-adenosyl-L-methionine (SAM)-dependent reaction. The protein is Phosphomethylpyrimidine synthase of Thermotoga neapolitana (strain ATCC 49049 / DSM 4359 / NBRC 107923 / NS-E).